The chain runs to 292 residues: T-box transcription factor tbx-9 (292 aa).

The segment at residues 10–194 (GSQETLWKIF…HNSFAKGFRD (185 aa)) is a DNA-binding region (T-box). 2 disordered regions span residues 192–227 (FRDG…EVAP) and 265–292 (STPS…DIVG). Low complexity-rich tracts occupy residues 204–223 (PSYS…RSPP) and 265–275 (STPSSSSSELS). Positions 280–292 (EDQEVEEDIDIVG) are enriched in acidic residues.

It localises to the nucleus. Functionally, transcription factor. Involved in the control of early morphogenesis of the intestine, hypodermis and body-wall muscle. Involved in regulating expression of vab-7. Appears to have partially redundant function to tbx-8. Positively modulates expression of homeobox protein lin-39, perhaps by binding to regulatory regions of the lin-39 gene, acting in the vulval lineage. This chain is T-box transcription factor tbx-9 (tbx-9), found in Caenorhabditis elegans.